The chain runs to 147 residues: uncharacterized protein (147 aa).

Residues 11–147 form the HTH marR-type domain; sequence NTSPGFLLWQ…SGLQELLKHE (137 aa). The H-T-H motif DNA-binding region spans 61–84; sequence QKKLASFSQTNIMMVSEVVRTLEK.

This is an uncharacterized protein from Bacillus subtilis (strain 168).